The primary structure comprises 189 residues: MILIIDNYDSFTYNLAQCVGELGYDVLVCRNDEIDIPTIKQLNPNKIIISPGPGKPSDSGISLDVISSFSDSIPILGVCLGHQSIGYLNGGRIIKVSEIMHGKTSKIYHNNEDLFKTLPNPFIATRYHSLIIDNLNFPSSLAITAWTENNIIMACRHKDNQMLRGIQFHPESLWTFYGQQLLRNFLEYS.

The 189-residue stretch at 1–189 (MILIIDNYDS…QLLRNFLEYS (189 aa)) folds into the Glutamine amidotransferase type-1 domain. Residue 52-54 (GPG) participates in L-glutamine binding. Catalysis depends on cysteine 79, which acts as the Nucleophile; for GATase activity. L-glutamine-binding positions include glutamine 83 and 129-130 (SL). Residues histidine 169 and glutamate 171 contribute to the active site.

In terms of assembly, tetramer of two components I and two components II.

It is found in the plastid. Its subcellular location is the chloroplast. The catalysed reaction is chorismate + L-glutamine = anthranilate + pyruvate + L-glutamate + H(+). Its pathway is amino-acid biosynthesis; L-tryptophan biosynthesis; L-tryptophan from chorismate: step 1/5. This is Anthranilate synthase component 2 (trpG) from Pyropia yezoensis (Susabi-nori).